Consider the following 506-residue polypeptide: Ecdysteroid UDP-glucosyltransferase (506 aa).

An N-terminal signal peptide occupies residues Met-1 to Ala-18.

This sequence belongs to the UDP-glycosyltransferase family. In terms of processing, glycosylated.

Its function is as follows. Catalyzes the transfer of glucose from UDP-glucose to ecdysteroids which are insect molting hormones. Acts on the host at the organismal level to block its development, thereby increasing the yield of progeny virus. The sequence is that of Ecdysteroid UDP-glucosyltransferase (EGT) from Lepidoptera (butterflies and moths).